Reading from the N-terminus, the 208-residue chain is Small ribosomal subunit protein bS6 (208 aa).

Disordered regions lie at residues 121 to 143 (SENNPDNPDAPVTSGLASVKPRL) and 185 to 208 (NQQTSQANNNQPRFQNQFKKGAKP). Residues 185–195 (NQQTSQANNNQ) are compositionally biased toward low complexity.

The protein belongs to the bacterial ribosomal protein bS6 family.

Functionally, binds together with bS18 to 16S ribosomal RNA. The polypeptide is Small ribosomal subunit protein bS6 (rpsF) (Mycoplasma genitalium (strain ATCC 33530 / DSM 19775 / NCTC 10195 / G37) (Mycoplasmoides genitalium)).